We begin with the raw amino-acid sequence, 103 residues long: BLOC-1-related complex subunit 7 (103 aa).

Belongs to the BORCS7 family.

The protein resides in the lysosome membrane. Its function is as follows. As part of a BORC-like complex may play a role in lysosomes movement and localization at the cell periphery. Associated with the cytosolic face of lysosomes, this complex may couple lysosomes to microtubule plus-end-directed kinesin motor. This is BLOC-1-related complex subunit 7 from Danio rerio (Zebrafish).